We begin with the raw amino-acid sequence, 250 residues long: MSGHSKWATIKRKKAVTDQKRGSLFTKLVKEITIAAKMGGGDPSGNPRLRLAIDTARSNSMPMDNIQRAVKKGTGELEGVIYDEITYEGYGPAGIALIIETATDNRNRTVADLRHIMSRNNGSLGESGSVSWMFQRKGSLEVPVSAASEEALMEALLEAGLEDLSNDGGETYTVITDVRDLEAAKKALEEQAIAFENAKMDLIPENYIELEAEDARKVIKLIDALEENDDVQAVYSNMEISESAMNSLED.

It belongs to the TACO1 family.

The protein localises to the cytoplasm. This Chlorobium luteolum (strain DSM 273 / BCRC 81028 / 2530) (Pelodictyon luteolum) protein is Probable transcriptional regulatory protein Plut_1643.